The primary structure comprises 321 residues: Olfactory receptor 52P1 (321 aa).

The Extracellular segment spans residues 1–27 (MESPNHTDVDPSVFFLLGIPGLEQFHL). A glycan (N-linked (GlcNAc...) asparagine) is linked at Asn5. The chain crosses the membrane as a helical span at residues 28–48 (WLSLPVCGLGTATIVGNITIL). Topologically, residues 49–56 (VVVATEPV) are cytoplasmic. The helical transmembrane segment at 57–77 (LHKPVYLFLCMLSTIDLAASV) threads the bilayer. Residues 78–101 (STVPKLLAIFWCGAGHISASACLA) lie on the Extracellular side of the membrane. Cys99 and Cys191 form a disulfide bridge. A helical transmembrane segment spans residues 102–122 (QMFFIHAFCMMESTVLLAMAF). The Cytoplasmic segment spans residues 123–141 (DRYVAICHPLRYATILTDT). The helical transmembrane segment at 142–162 (IIAHIGVAAVVRGSLLMLPCP) threads the bilayer. Over 163–198 (FLIGRLNFCQSHVILHTYCEHMAVVKLACGDTRPNR) the chain is Extracellular. Residues 199–219 (VYGLTAALLVIGVDLFCIGLS) traverse the membrane as a helical segment. The Cytoplasmic portion of the chain corresponds to 220–239 (YALSAQAVLRLSSHEARSKA). A helical membrane pass occupies residues 240-260 (LGTCGSHVCVILISYTPALFS). The Extracellular segment spans residues 261-275 (FFTHRFGHHVPVHIH). Residues 276–296 (ILLANVYLLLPPALNPVVYGV) traverse the membrane as a helical segment. At 297–315 (KTKQIRKRVVRVFQSGQGM) the chain is on the cytoplasmic side.

The protein belongs to the G-protein coupled receptor 1 family.

The protein resides in the cell membrane. Odorant receptor. The sequence is that of Olfactory receptor 52P1 from Homo sapiens (Human).